Consider the following 274-residue polypeptide: Ribosomal RNA small subunit methyltransferase A (274 aa).

The S-adenosyl-L-methionine site is built by His-15, Leu-17, Gly-42, Glu-64, Asp-89, and Asn-108.

This sequence belongs to the class I-like SAM-binding methyltransferase superfamily. rRNA adenine N(6)-methyltransferase family. RsmA subfamily.

It localises to the cytoplasm. It carries out the reaction adenosine(1518)/adenosine(1519) in 16S rRNA + 4 S-adenosyl-L-methionine = N(6)-dimethyladenosine(1518)/N(6)-dimethyladenosine(1519) in 16S rRNA + 4 S-adenosyl-L-homocysteine + 4 H(+). Specifically dimethylates two adjacent adenosines (A1518 and A1519) in the loop of a conserved hairpin near the 3'-end of 16S rRNA in the 30S particle. May play a critical role in biogenesis of 30S subunits. The polypeptide is Ribosomal RNA small subunit methyltransferase A (Prochlorococcus marinus (strain AS9601)).